The chain runs to 338 residues: tRNA N6-adenosine threonylcarbamoyltransferase (338 aa).

Residues histidine 111 and histidine 115 each coordinate Fe cation. Substrate contacts are provided by residues 134–138 (LLSGG), aspartate 167, glycine 180, and asparagine 275. Fe cation is bound at residue aspartate 304.

Belongs to the KAE1 / TsaD family. Requires Fe(2+) as cofactor.

The protein localises to the cytoplasm. It catalyses the reaction L-threonylcarbamoyladenylate + adenosine(37) in tRNA = N(6)-L-threonylcarbamoyladenosine(37) in tRNA + AMP + H(+). Functionally, required for the formation of a threonylcarbamoyl group on adenosine at position 37 (t(6)A37) in tRNAs that read codons beginning with adenine. Is involved in the transfer of the threonylcarbamoyl moiety of threonylcarbamoyl-AMP (TC-AMP) to the N6 group of A37, together with TsaE and TsaB. TsaD likely plays a direct catalytic role in this reaction. This is tRNA N6-adenosine threonylcarbamoyltransferase from Leptospira borgpetersenii serovar Hardjo-bovis (strain JB197).